The following is a 170-amino-acid chain: Mitotic-spindle organizing protein 2B (170 aa).

Disordered regions lie at residues 1–26 and 102–170; these read MSRG…SPDA and SADS…GSST. The segment covering 8-20 has biased composition (low complexity); it reads GSQAMASSQAAGP. Over residues 123-132 the composition is skewed to polar residues; it reads PNPTTSTTQG. The segment covering 151–170 has biased composition (low complexity); that stretch reads SGSRMQKSSSSGKSSGGSST.

The protein belongs to the MOZART2 family. As to quaternary structure, part of the gamma-tubulin complex. Interacts with TUBG1.

It is found in the cytoplasm. The protein localises to the cytoskeleton. Its subcellular location is the microtubule organizing center. It localises to the centrosome. The protein resides in the spindle. The sequence is that of Mitotic-spindle organizing protein 2B (mzt2b) from Xenopus tropicalis (Western clawed frog).